We begin with the raw amino-acid sequence, 352 residues long: AP2/ERF and B3 domain-containing transcription factor At1g51120 (352 aa).

The interval 1 to 20 (MDEMSNVAKTTTETSGLTDS) is disordered. A compositionally biased stretch (polar residues) spans 7-20 (VAKTTTETSGLTDS). A DNA-binding region (AP2/ERF) is located at residues 46–103 (KFKGVVQQQNGHWGAQIYADHRRIWLGTFKSAHEAAAAYDSASIKLRSFDANSHRNFP). The TF-B3 DNA-binding region spans 178-297 (FQKELTPSDV…KTFLMIDVHH (120 aa)).

Belongs to the AP2/ERF transcription factor family. RAV subfamily.

It localises to the nucleus. Probably acts as a transcriptional activator. Binds to the GCC-box pathogenesis-related promoter element. May be involved in the regulation of gene expression by stress factors and by components of stress signal transduction pathways. In Arabidopsis thaliana (Mouse-ear cress), this protein is AP2/ERF and B3 domain-containing transcription factor At1g51120.